Here is a 37-residue protein sequence, read N- to C-terminus: Trypsin inhibitor 3 (37 aa).

3 disulfide bridges follow: C4-C21, C11-C25, and C20-C36.

In terms of biological role, trypsin inhibitor. The polypeptide is Trypsin inhibitor 3 (Spinacia oleracea (Spinach)).